Here is a 66-residue protein sequence, read N- to C-terminus: Large ribosomal subunit protein uL29 (66 aa).

This sequence belongs to the universal ribosomal protein uL29 family.

This chain is Large ribosomal subunit protein uL29, found in Thermococcus gammatolerans (strain DSM 15229 / JCM 11827 / EJ3).